We begin with the raw amino-acid sequence, 355 residues long: Peptide chain release factor 1 (355 aa).

Q233 is modified (N5-methylglutamine).

Belongs to the prokaryotic/mitochondrial release factor family. Post-translationally, methylated by PrmC. Methylation increases the termination efficiency of RF1.

Its subcellular location is the cytoplasm. In terms of biological role, peptide chain release factor 1 directs the termination of translation in response to the peptide chain termination codons UAG and UAA. The polypeptide is Peptide chain release factor 1 (Caldicellulosiruptor bescii (strain ATCC BAA-1888 / DSM 6725 / KCTC 15123 / Z-1320) (Anaerocellum thermophilum)).